The chain runs to 474 residues: Replication factor C large subunit (474 aa).

Position 45-52 (45-52) interacts with ATP; sequence GPPGCGKT. Over residues 415–468 the composition is skewed to basic and acidic residues; the sequence is DKKTNNKKGKENKTKNTTKKIKEIKETPKKEEVKEPKKQIEKQKSEKKEPKKQM. The interval 415–474 is disordered; the sequence is DKKTNNKKGKENKTKNTTKKIKEIKETPKKEEVKEPKKQIEKQKSEKKEPKKQMTLESFF.

This sequence belongs to the activator 1 small subunits family. RfcL subfamily. Heteromultimer composed of small subunits (RfcS) and large subunits (RfcL).

Its function is as follows. Part of the RFC clamp loader complex which loads the PCNA sliding clamp onto DNA. This Methanococcus aeolicus (strain ATCC BAA-1280 / DSM 17508 / OCM 812 / Nankai-3) protein is Replication factor C large subunit.